We begin with the raw amino-acid sequence, 665 residues long: Sodium-dependent phosphate transporter 1-B (665 aa).

Transmembrane regions (helical) follow at residues 26–46 (YMWL…SVGA), 67–87 (ACIL…AKVS), 107–127 (LMAG…AASF), 163–183 (IVAS…VLFY), 202–222 (ALPF…MFTG), and 235–255 (GVLL…WFAV). Disordered regions lie at residues 294–345 (VPEE…APKT) and 423–442 (ESEF…AQER). Over residues 296–306 (EESSVLSSSTP) the composition is skewed to low complexity. Positions 329-338 (ADQKDCKESD) are enriched in basic and acidic residues. Transmembrane regions (helical) follow at residues 499 to 519 (VSML…FAHG), 548 to 568 (TPIW…WVWG), 588 to 608 (FSIE…GLPV), and 638 to 658 (IFMA…AIMA).

The protein belongs to the inorganic phosphate transporter (PiT) (TC 2.A.20) family.

It localises to the membrane. In terms of biological role, sodium-phosphate symporter which plays a fundamental housekeeping role in phosphate transport. The polypeptide is Sodium-dependent phosphate transporter 1-B (slc20a1b) (Danio rerio (Zebrafish)).